The chain runs to 231 residues: ATP-dependent dethiobiotin synthetase BioD (231 aa).

ATP is bound at residue 13–18; the sequence is DVGKTV. Thr17 contributes to the Mg(2+) binding site. The active site involves Lys38. ATP is bound by residues Asp55, 116 to 119, and 176 to 177; these read EGAG and NR. Mg(2+) contacts are provided by Asp55 and Glu116.

Belongs to the dethiobiotin synthetase family. As to quaternary structure, homodimer. The cofactor is Mg(2+).

Its subcellular location is the cytoplasm. The enzyme catalyses (7R,8S)-7,8-diammoniononanoate + CO2 + ATP = (4R,5S)-dethiobiotin + ADP + phosphate + 3 H(+). Its pathway is cofactor biosynthesis; biotin biosynthesis; biotin from 7,8-diaminononanoate: step 1/2. Catalyzes a mechanistically unusual reaction, the ATP-dependent insertion of CO2 between the N7 and N8 nitrogen atoms of 7,8-diaminopelargonic acid (DAPA, also called 7,8-diammoniononanoate) to form a ureido ring. This Vibrio cholerae serotype O1 (strain ATCC 39315 / El Tor Inaba N16961) protein is ATP-dependent dethiobiotin synthetase BioD.